Here is a 304-residue protein sequence, read N- to C-terminus: Coenzyme PQQ synthesis protein B (304 aa).

Belongs to the PqqB family.

The protein operates within cofactor biosynthesis; pyrroloquinoline quinone biosynthesis. May be involved in the transport of PQQ or its precursor to the periplasm. The polypeptide is Coenzyme PQQ synthesis protein B (Pseudomonas aeruginosa (strain LESB58)).